The chain runs to 1786 residues: Transcription initiation factor TFIID subunit 1b (1786 aa).

2 disordered regions span residues 54 to 83 (EDYDEQGGQEKEHVPVEKSFDSEEREPVVL) and 350 to 372 (FGSRGSQSTNESTNKSRHHPQLL). Over residues 61–83 (GQEKEHVPVEKSFDSEEREPVVL) the composition is skewed to basic and acidic residues. Positions 352-362 (SRGSQSTNEST) are enriched in polar residues. Residues 574 to 650 (MTIVVKSLGG…VHLLRTKVHL (77 aa)) enclose the Ubiquitin-like domain. Positions 1303-1313 (MKTNKHCPKYR) are enriched in basic residues. 3 disordered regions span residues 1303-1382 (MKTN…DVAA), 1397-1471 (LKIS…KDQA), and 1596-1634 (SEREEEKRRKAKQKKKLQRGILENYPPRRNDGISSESGQ). Polar residues predominate over residues 1357–1377 (TKISVNEATKVGDSTSKTPGS). The segment covering 1397-1407 (LKISSKAKPKA) has biased composition (basic residues). Residues 1433 to 1464 (HNPSVSGQLLPSTETDQAASSRYTTSVPQPSL) show a composition bias toward polar residues. Coiled-coil stretches lie at residues 1591–1620 (REVIRSEREEEKRRKAKQKKKLQRGILENY) and 1752–1786 (LADELLVKCDRLLDEYRDELKEAEKGIVDSSDSLR). The span at 1604–1613 (RKAKQKKKLQ) shows a compositional bias: basic residues. Residues 1656–1774 (KRRKKGQVGL…DEYRDELKEA (119 aa)) enclose the Bromo domain.

It belongs to the TAF1 family. Component of the TFIID complex. TFIID is composed of TATA binding protein (TBP) and a number of TBP-associated factors (TAFs) whose MWs range from 14-217 kDa. As to expression, expressed in roots, shoots, leaves and inflorescences.

It localises to the nucleus. In terms of biological role, TAFs are components of the transcription factor IID (TFIID) complex that is essential for mediating regulation of RNA polymerase transcription. Core scaffold of the TFIID complex. Acts as a histone acetyltransferase involved in the light regulation of growth and gene expression. Required for H3K9, H3K27, and H4K12 acetylation on the target promoters. This chain is Transcription initiation factor TFIID subunit 1b (TAF1B), found in Arabidopsis thaliana (Mouse-ear cress).